A 64-amino-acid polypeptide reads, in one-letter code: Large ribosomal subunit protein bL33 (64 aa).

A disordered region spans residues 19 to 40 (TSTDPKRSNGVSRYTTEKNRRN).

Belongs to the bacterial ribosomal protein bL33 family.

The polypeptide is Large ribosomal subunit protein bL33 (Prochlorococcus marinus (strain MIT 9215)).